The chain runs to 362 residues: Cobalt-precorrin-5B C(1)-methyltransferase (362 aa).

It belongs to the CbiD family.

The enzyme catalyses Co-precorrin-5B + S-adenosyl-L-methionine = Co-precorrin-6A + S-adenosyl-L-homocysteine. The protein operates within cofactor biosynthesis; adenosylcobalamin biosynthesis; cob(II)yrinate a,c-diamide from sirohydrochlorin (anaerobic route): step 6/10. Functionally, catalyzes the methylation of C-1 in cobalt-precorrin-5B to form cobalt-precorrin-6A. The sequence is that of Cobalt-precorrin-5B C(1)-methyltransferase from Burkholderia orbicola (strain MC0-3).